We begin with the raw amino-acid sequence, 94 residues long: PqqA binding protein (94 aa).

The protein belongs to the PqqD family. Monomer. Interacts with PqqE.

Its pathway is cofactor biosynthesis; pyrroloquinoline quinone biosynthesis. Functionally, functions as a PqqA binding protein and presents PqqA to PqqE, in the pyrroloquinoline quinone (PQQ) biosynthetic pathway. The sequence is that of PqqA binding protein from Pseudomonas savastanoi pv. phaseolicola (strain 1448A / Race 6) (Pseudomonas syringae pv. phaseolicola (strain 1448A / Race 6)).